We begin with the raw amino-acid sequence, 264 residues long: MSATGEEMTQQSYIQHHLTNLTVGEGFWTWNIDSLLFSVGLGMLFLWLFYRAGKKATTGVPGKFQCFVEIIVEFVDSSVKETFHGRNPVIAPLALTIFVWIFMMNFMDMIPVDWLPSLALLAGVPYLKVVPTTDVNITFSLALGVFVLIIYYSIKVKGVSGFVKELTFQPFNHWAMIPVNLLLETVTLVAKPISLALRLFGNLYAGELIFILIALMYGSNVALSALGVGLQLGWLIFHILVITLQAFIFMMLTIVYLSMAHEDH.

7 helical membrane passes run 30–50 (WNID…WLFY), 90–110 (IAPL…MDMI), 111–131 (PVDW…KVVP), 134–154 (DVNI…YYSI), 177–197 (IPVN…SLAL), 208–228 (LIFI…ALGV), and 235–255 (LIFH…LTIV).

It belongs to the ATPase A chain family. In terms of assembly, F-type ATPases have 2 components, CF(1) - the catalytic core - and CF(0) - the membrane proton channel. CF(1) has five subunits: alpha(3), beta(3), gamma(1), delta(1), epsilon(1). CF(0) has three main subunits: a(1), b(2) and c(9-12). The alpha and beta chains form an alternating ring which encloses part of the gamma chain. CF(1) is attached to CF(0) by a central stalk formed by the gamma and epsilon chains, while a peripheral stalk is formed by the delta and b chains.

The protein localises to the cell inner membrane. Functionally, key component of the proton channel; it plays a direct role in the translocation of protons across the membrane. In Shewanella frigidimarina (strain NCIMB 400), this protein is ATP synthase subunit a.